Consider the following 85-residue polypeptide: Small ribosomal subunit protein bS20 (85 aa).

Residues 1–25 (MANIKSAIKRAKLSEERRAHNASIK) form a disordered region.

It belongs to the bacterial ribosomal protein bS20 family.

Its function is as follows. Binds directly to 16S ribosomal RNA. This Bacillus anthracis (strain A0248) protein is Small ribosomal subunit protein bS20.